A 191-amino-acid chain; its full sequence is uncharacterized protein (191 aa).

Transmembrane regions (helical) follow at residues 4–24 (IYRQTIHLVFGVLIAFSVLIF), 26–46 (KQLIIPLIVSIVIGICLYFLC), 68–88 (GKGAIYFAIGMLISLILIDDI), 90–110 (AVFFGILVFAVGDSLATIIGI), 135–155 (LILYPFYGTYGIFVALISAFI), and 168–188 (LYLPFIVAFIINHQINICSLM).

The protein localises to the cell membrane. This is an uncharacterized protein from Methanocaldococcus jannaschii (strain ATCC 43067 / DSM 2661 / JAL-1 / JCM 10045 / NBRC 100440) (Methanococcus jannaschii).